The chain runs to 814 residues: Lon protease 1 (814 aa).

The span at methionine 1–glutamate 17 shows a compositional bias: basic and acidic residues. Residues methionine 1–alanine 28 are disordered. The 197-residue stretch at leucine 49 to leucine 245 folds into the Lon N-terminal domain. Glycine 398–threonine 405 is an ATP binding site. One can recognise a Lon proteolytic domain in the interval glutamate 633 to glycine 814. Catalysis depends on residues serine 721 and lysine 764.

This sequence belongs to the peptidase S16 family. As to quaternary structure, homohexamer. Organized in a ring with a central cavity.

The protein resides in the cytoplasm. The enzyme catalyses Hydrolysis of proteins in presence of ATP.. Functionally, ATP-dependent serine protease that mediates the selective degradation of mutant and abnormal proteins as well as certain short-lived regulatory proteins. Required for cellular homeostasis and for survival from DNA damage and developmental changes induced by stress. Degrades polypeptides processively to yield small peptide fragments that are 5 to 10 amino acids long. Binds to DNA in a double-stranded, site-specific manner. In Syntrophotalea carbinolica (strain DSM 2380 / NBRC 103641 / GraBd1) (Pelobacter carbinolicus), this protein is Lon protease 1.